The following is a 100-amino-acid chain: Integration host factor subunit alpha (100 aa).

The protein belongs to the bacterial histone-like protein family. As to quaternary structure, heterodimer of an alpha and a beta chain.

This protein is one of the two subunits of integration host factor, a specific DNA-binding protein that functions in genetic recombination as well as in transcriptional and translational control. The protein is Integration host factor subunit alpha of Alcanivorax borkumensis (strain ATCC 700651 / DSM 11573 / NCIMB 13689 / SK2).